We begin with the raw amino-acid sequence, 347 residues long: MEIRLSEIAQFLGCAIEGDGEAPIRGIAPLHQAQASELSFYTNRKYAAQARLSKAGAIIVGAKDREQFAGRRLLISDNPYRDFARVVDRWFNRSYRPAPGVHPTAIVGDDVQIAENCSIGAYCVIEDGVTIKAHTVLFPFCYVGAKTILGEHCLLYPRVTLLERVRIGHRVILHPGVVIGGDGFGFAPDPPQGYFKVPQVGWVEIADDVEVQCNTAIDRGALGPTRIGQGSKIDNLVQVGHNVEIGEHSIIVSQVGISGSSKIGNWVTLAGQVGLVGHIRIGDGAVITAQSGVAKDVPPKAIMTGSPVQPMMENRRALAELNRLRELRKKVRELERRLTVLEQVESC.

The active-site Proton acceptor is the H241.

The protein belongs to the transferase hexapeptide repeat family. LpxD subfamily. In terms of assembly, homotrimer.

It carries out the reaction a UDP-3-O-[(3R)-3-hydroxyacyl]-alpha-D-glucosamine + a (3R)-hydroxyacyl-[ACP] = a UDP-2-N,3-O-bis[(3R)-3-hydroxyacyl]-alpha-D-glucosamine + holo-[ACP] + H(+). It functions in the pathway bacterial outer membrane biogenesis; LPS lipid A biosynthesis. Catalyzes the N-acylation of UDP-3-O-acylglucosamine using 3-hydroxyacyl-ACP as the acyl donor. Is involved in the biosynthesis of lipid A, a phosphorylated glycolipid that anchors the lipopolysaccharide to the outer membrane of the cell. The polypeptide is UDP-3-O-acylglucosamine N-acyltransferase (Nitrosococcus oceani (strain ATCC 19707 / BCRC 17464 / JCM 30415 / NCIMB 11848 / C-107)).